The primary structure comprises 556 residues: Formate--tetrahydrofolate ligase (556 aa).

Residue 65 to 72 coordinates ATP; the sequence is TPAGEGKS.

The protein belongs to the formate--tetrahydrofolate ligase family.

The catalysed reaction is (6S)-5,6,7,8-tetrahydrofolate + formate + ATP = (6R)-10-formyltetrahydrofolate + ADP + phosphate. The protein operates within one-carbon metabolism; tetrahydrofolate interconversion. This Streptococcus thermophilus (strain ATCC BAA-250 / LMG 18311) protein is Formate--tetrahydrofolate ligase.